Here is a 149-residue protein sequence, read N- to C-terminus: UPF0260 protein PSPTO_3918 (149 aa).

This sequence belongs to the UPF0260 family.

The protein is UPF0260 protein PSPTO_3918 of Pseudomonas syringae pv. tomato (strain ATCC BAA-871 / DC3000).